Reading from the N-terminus, the 331-residue chain is Tetraacyldisaccharide 4'-kinase (331 aa).

T55–T62 lines the ATP pocket.

It belongs to the LpxK family.

The enzyme catalyses a lipid A disaccharide + ATP = a lipid IVA + ADP + H(+). It functions in the pathway glycolipid biosynthesis; lipid IV(A) biosynthesis; lipid IV(A) from (3R)-3-hydroxytetradecanoyl-[acyl-carrier-protein] and UDP-N-acetyl-alpha-D-glucosamine: step 6/6. Its function is as follows. Transfers the gamma-phosphate of ATP to the 4'-position of a tetraacyldisaccharide 1-phosphate intermediate (termed DS-1-P) to form tetraacyldisaccharide 1,4'-bis-phosphate (lipid IVA). This is Tetraacyldisaccharide 4'-kinase from Edwardsiella ictaluri (strain 93-146).